Reading from the N-terminus, the 527-residue chain is Light-independent protochlorophyllide reductase subunit B (527 aa).

D36 contacts [4Fe-4S] cluster. The active-site Proton donor is the D292. Position 428-429 (428-429) interacts with substrate; that stretch reads GL.

This sequence belongs to the ChlB/BchB/BchZ family. Protochlorophyllide reductase is composed of three subunits; BchL, BchN and BchB. Forms a heterotetramer of two BchB and two BchN subunits. [4Fe-4S] cluster is required as a cofactor.

It catalyses the reaction chlorophyllide a + oxidized 2[4Fe-4S]-[ferredoxin] + 2 ADP + 2 phosphate = protochlorophyllide a + reduced 2[4Fe-4S]-[ferredoxin] + 2 ATP + 2 H2O. The protein operates within porphyrin-containing compound metabolism; bacteriochlorophyll biosynthesis (light-independent). Its function is as follows. Component of the dark-operative protochlorophyllide reductase (DPOR) that uses Mg-ATP and reduced ferredoxin to reduce ring D of protochlorophyllide (Pchlide) to form chlorophyllide a (Chlide). This reaction is light-independent. The NB-protein (BchN-BchB) is the catalytic component of the complex. This chain is Light-independent protochlorophyllide reductase subunit B, found in Chlorobium phaeovibrioides (strain DSM 265 / 1930) (Prosthecochloris vibrioformis (strain DSM 265)).